Here is a 159-residue protein sequence, read N- to C-terminus: uncharacterized protein (159 aa).

Over residues 1–13 the composition is skewed to polar residues; the sequence is MTQPTRPSVTCDQ. Residues 1–57 are disordered; sequence MTQPTRPSVTCDQGSSTIGGTAAQATTSSSATSGSNYQRDRLGRRPEIGVGGQPQIC. Residues 14 to 35 show a composition bias toward low complexity; it reads GSSTIGGTAAQATTSSSATSGS. A compositionally biased stretch (basic and acidic residues) spans 38 to 47; that stretch reads QRDRLGRRPE.

This is an uncharacterized protein from Homo sapiens (Human).